The sequence spans 333 residues: DNA-directed RNA polymerase subunit alpha (333 aa).

The alpha N-terminal domain (alpha-NTD) stretch occupies residues 1–246; that stretch reads MEKFIKINWT…AHLNIIGDVN (246 aa). The segment at 263-333 is alpha C-terminal domain (alpha-CTD); sequence HSKTQNILIQ…YNVFLDKGEE (71 aa).

Belongs to the RNA polymerase alpha chain family. As to quaternary structure, homodimer. The RNAP catalytic core consists of 2 alpha, 1 beta, 1 beta' and 1 omega subunit. When a sigma factor is associated with the core the holoenzyme is formed, which can initiate transcription.

It carries out the reaction RNA(n) + a ribonucleoside 5'-triphosphate = RNA(n+1) + diphosphate. DNA-dependent RNA polymerase catalyzes the transcription of DNA into RNA using the four ribonucleoside triphosphates as substrates. In Mycoplasma mobile (strain ATCC 43663 / 163K / NCTC 11711) (Mesomycoplasma mobile), this protein is DNA-directed RNA polymerase subunit alpha.